Here is a 307-residue protein sequence, read N- to C-terminus: Type 2A encapsulin shell protein (307 aa).

This sequence belongs to the encapsulin family. Family 2A subfamily. Homooligomeric. The encapsulin nanocompartment is formed by 60 subunits; monomers form pentamers which assemble to form shells. There are 12 charged pores where the pentamers meet as well as 3-fold axis channels and dimer channels.

It localises to the encapsulin nanocompartment. Its function is as follows. Shell component of a type 2A encapsulin nanocompartment. Forms encapsulin nanocompartments about 24 nm in diameter from 60 monomers. Probably encapsulates at least cysteine desulfurase (CyD) and allows passage of cysteine into its interior, probably involved in sulfur metabolism. The polypeptide is Type 2A encapsulin shell protein (Mycobacterium avium).